A 285-amino-acid chain; its full sequence is MKIDGHTRLAAVIAKPIKHSISPFIHNMAYDLTDTNAVYLAFEVDRENLEQAVENIRLHQMLGANISMPYKQEVITYLDELDESALLIGAVNTVVNQNDRLIGYNTDGLGFFRSLSNFHIKGKNLTILGAGGAASAIIGQAMLDGVEKVCVFDLRDRLAGHQERMGQMSQRLGHPIQLLAVEDLAALSDAVNQSDLFINATGLGMDGKSLPIPSDFTFPKGLLVADMTYCPAETPFLRLAREQGLQTVNGLGMLLYQAEKAFELMTGKKMPSEEIKKALIEKLEI.

Shikimate is bound by residues 20–22 (SIS) and Ser67. Lys71 (proton acceptor) is an active-site residue. Residue Glu83 participates in NADP(+) binding. Shikimate contacts are provided by Asn92 and Asp107. Residues 129-133 (GAGGA) and Met227 contribute to the NADP(+) site. Shikimate is bound at residue Tyr229. Residue Gly250 participates in NADP(+) binding.

Belongs to the shikimate dehydrogenase family. As to quaternary structure, homodimer.

The catalysed reaction is shikimate + NADP(+) = 3-dehydroshikimate + NADPH + H(+). It participates in metabolic intermediate biosynthesis; chorismate biosynthesis; chorismate from D-erythrose 4-phosphate and phosphoenolpyruvate: step 4/7. Its function is as follows. Involved in the biosynthesis of the chorismate, which leads to the biosynthesis of aromatic amino acids. Catalyzes the reversible NADPH linked reduction of 3-dehydroshikimate (DHSA) to yield shikimate (SA). In Streptococcus gordonii (strain Challis / ATCC 35105 / BCRC 15272 / CH1 / DL1 / V288), this protein is Shikimate dehydrogenase (NADP(+)).